The chain runs to 428 residues: Lysophosphatidic acid phosphatase type 6 (428 aa).

The transit peptide at 1–32 (MITGVFSMRLWTPVGVLTSLAYCLHQRRVALA) directs the protein to the mitochondrion. Residues 58-168 (RHGARSPRKP…VFIRSTNIFR (111 aa)) form a substrate binding region. His-59 serves as the catalytic Nucleophile. Asp-335 serves as the catalytic Proton donor.

Belongs to the histidine acid phosphatase family. Monomer.

The protein localises to the mitochondrion. It catalyses the reaction a phosphate monoester + H2O = an alcohol + phosphate. The enzyme catalyses 1-(9Z-octadecenoyl)-sn-glycero-3-phosphate + H2O = 1-(9Z-octadecenoyl)-sn-glycerol + phosphate. Functionally, hydrolyzes lysophosphatidic acid (LPA) containing a medium length fatty acid chain to the corresponding monoacylglycerol. Has highest activity with lysophosphatidic acid containing myristate (C14:0), monounsaturated oleate (C18:1) or palmitate (C16:0), and lower activity with C18:0 and C6:0 lysophosphatidic acid. The polypeptide is Lysophosphatidic acid phosphatase type 6 (ACP6) (Pongo abelii (Sumatran orangutan)).